Here is a 985-residue protein sequence, read N- to C-terminus: Ephrin type-B receptor 1-A (985 aa).

A signal peptide spans 1–19; it reads MELNVLLLLLCLSGGQVGA. The Extracellular segment spans residues 20-542; the sequence is VEETLMDTRT…YKSELREQLP (523 aa). In terms of domain architecture, Eph LBD spans 21 to 203; sequence EETLMDTRTA…FFKEMPSVVQ (183 aa). Fibronectin type-III domains are found at residues 324 to 434 and 435 to 532; these read VPSG…TNQA and APSS…TAED. N-linked (GlcNAc...) asparagine glycans are attached at residues asparagine 336, asparagine 428, and asparagine 482. The helical transmembrane segment at 543–563 threads the bilayer; it reads LTGSAAAGVVFIVSLVAISIV. Topologically, residues 564-985 are cytoplasmic; it reads CSRKRTYSKE…QITQSPTSIA (422 aa). The region spanning 620–883 is the Protein kinase domain; that stretch reads VKIEEVIGAG…EIVNTLRPMI (264 aa). Residues 626–634 and lysine 652 contribute to the ATP site; that span reads IGAGEFGEV. Residue aspartate 745 is the Proton acceptor of the active site. Positions 912–976 constitute an SAM domain; that stretch reads SAFTSVDDWL…LNSIQSMRVQ (65 aa). The short motif at 983–985 is the PDZ-binding element; the sequence is SIA.

This sequence belongs to the protein kinase superfamily. Tyr protein kinase family. Ephrin receptor subfamily. Heterotetramer upon binding of the ligand. The heterotetramer is composed of an ephrin dimer and a receptor dimer. Oligomerization is probably required to induce biological responses. Phosphorylated. Autophosphorylation is stimulated by ligands.

It localises to the cell membrane. The protein resides in the early endosome membrane. It is found in the cell projection. Its subcellular location is the dendrite. The enzyme catalyses L-tyrosyl-[protein] + ATP = O-phospho-L-tyrosyl-[protein] + ADP + H(+). Its function is as follows. Receptor tyrosine kinase which binds promiscuously transmembrane ephrin-B family ligands residing on adjacent cells, leading to contact-dependent bidirectional signaling into neighboring cells. The signaling pathway downstream of the receptor is referred to as forward signaling while the signaling pathway downstream of the ephrin ligand is referred to as reverse signaling. May play a role in axon guidance during nervous system development. May also play an important redundant role with other ephrin-B receptors in development and maturation of dendritic spines and synapse formation. More generally, may play a role in targeted cell migration and adhesion. Upon activation by ephrin-B ligands activates the MAPK/ERK and the JNK signaling cascades to regulate cell migration and adhesion respectively. This Xenopus laevis (African clawed frog) protein is Ephrin type-B receptor 1-A (ephb1-a).